Here is a 590-residue protein sequence, read N- to C-terminus: MSVGTLLNGLLVSIVAALLWKYSKLSEHAALLEEELHMTRQSQELSQAHIDYHVALQALQEHGTRMVCTGKMHTDRICRFDYLCYCSEAEEFVFFHSNSSVMLPNLGSRRFQPALLDLSSVEDHNTQYFNFLELPAATLRFMPKPVFVPDVTLILNRFNPDNLMHVFHDDLLPAFYTMKQFLDSDEDARLVFMEGWEEGPHFELYRLLSNKQPLLKEQLRNFGKLMCFTKSYIGLSKMTTWYQYGFVQPQGPKANILVSGNEIRHFAKVLMEKMNITRAAGGEKDQGNAEDEKPKDEYIVVFSRSTTRLILNEAELIMALAQEFQMRVVTVSLEEQSFPSIVQVISGASMLVSMHGAQLITSLFLPPGAVVVELYPFAVNPDQYTPYRTLASLPGMDLHYIPWRNTEEENTVTHPDRPWEQGGIAHLEKEEQEQIMASKDVPRHLCCRNPEWLFRIYQDTLVDIPSFLEVLQEGVKAKPLLKKSKLSSTLHPGRVRDPQCQTSVQTSNEAKLTVSWQIPWNLKYLKVREVKYEVWIQEQGENTYMPYILPQQNYTFSDNIKPFTTYLVWVRCIFNKNLLGPFADVLMCRT.

The Cytoplasmic portion of the chain corresponds to 1–4 (MSVG). The chain crosses the membrane as a helical; Signal-anchor for type II membrane protein span at residues 5–25 (TLLNGLLVSIVAALLWKYSKL). Residues 26 to 590 (SEHAALLEEE…PFADVLMCRT (565 aa)) lie on the Lumenal side of the membrane. Residues N98, N275, and N553 are each glycosylated (N-linked (GlcNAc...) asparagine). The Fibronectin type-III domain maps to 494-590 (RVRDPQCQTS…PFADVLMCRT (97 aa)).

Belongs to the glycosyltransferase 61 family.

It is found in the endoplasmic reticulum membrane. It carries out the reaction 3-O-(alpha-D-mannosyl)-L-threonyl-[protein] + UDP-N-acetyl-alpha-D-glucosamine = 3-O-(N-acetyl-beta-D-glucosaminyl-(1-&gt;4)-alpha-D-mannosyl)-L-threonyl-[protein] + UDP + H(+). Its pathway is protein modification; protein glycosylation. Functionally, O-linked mannose beta-1,4-N-acetylglucosaminyltransferase that transfers UDP-N-acetyl-D-glucosamine to the 4-position of the mannose to generate N-acetyl-D-glucosamine-beta-1,4-O-D-mannosylprotein. Involved in the biosynthesis of the phosphorylated O-mannosyl trisaccharide (N-acetylgalactosamine-beta-3-N-acetylglucosamine-beta-4-(phosphate-6-)mannose), a carbohydrate structure present in alpha-dystroglycan (DAG1), which is required for binding laminin G-like domain-containing extracellular proteins with high affinity. This chain is Protein O-linked-mannose beta-1,4-N-acetylglucosaminyltransferase 2 (pomgnt2), found in Takifugu rubripes (Japanese pufferfish).